Reading from the N-terminus, the 332-residue chain is Nicotianamine synthase 1 (332 aa).

Belongs to the nicotianamine synthase (NAS)-like family. As to expression, expressed in roots.

The enzyme catalyses 3 S-adenosyl-L-methionine = nicotianamine + 3 S-methyl-5'-thioadenosine + 3 H(+). Functionally, synthesizes nicotianamine, a polyamine that is the first intermediate in the synthesis of the phytosiderophores of the mugineic acid type found in gramineae which serve as a sensor for the physiological iron status within the plant, and/or might be involved in the transport of iron. This is Nicotianamine synthase 1 (NAS1) from Oryza sativa subsp. indica (Rice).